The following is a 166-amino-acid chain: Large ribosomal subunit protein uL10 (166 aa).

Belongs to the universal ribosomal protein uL10 family. Part of the ribosomal stalk of the 50S ribosomal subunit. The N-terminus interacts with L11 and the large rRNA to form the base of the stalk. The C-terminus forms an elongated spine to which L12 dimers bind in a sequential fashion forming a multimeric L10(L12)X complex.

Forms part of the ribosomal stalk, playing a central role in the interaction of the ribosome with GTP-bound translation factors. This Bacillus mycoides (strain KBAB4) (Bacillus weihenstephanensis) protein is Large ribosomal subunit protein uL10.